The chain runs to 371 residues: 3-dehydroquinate synthase (371 aa).

NAD(+)-binding positions include glycine 114–aspartate 118, threonine 138–threonine 139, lysine 151, lysine 160, and threonine 178–threonine 181. The Zn(2+) site is built by glutamate 193, histidine 258, and histidine 275.

Belongs to the sugar phosphate cyclases superfamily. Dehydroquinate synthase family. Co(2+) serves as cofactor. The cofactor is Zn(2+). It depends on NAD(+) as a cofactor.

The protein resides in the cytoplasm. It catalyses the reaction 7-phospho-2-dehydro-3-deoxy-D-arabino-heptonate = 3-dehydroquinate + phosphate. The protein operates within metabolic intermediate biosynthesis; chorismate biosynthesis; chorismate from D-erythrose 4-phosphate and phosphoenolpyruvate: step 2/7. Catalyzes the conversion of 3-deoxy-D-arabino-heptulosonate 7-phosphate (DAHP) to dehydroquinate (DHQ). The sequence is that of 3-dehydroquinate synthase from Synechococcus sp. (strain CC9605).